A 69-amino-acid polypeptide reads, in one-letter code: Pleurain-A3 (69 aa).

The signal sequence occupies residues 1-22; the sequence is MFTLKKTLLLLFFLGTISISLC. The propeptide occupies 23-43; sequence KQARDADEDDGRKMTEEEVKR. A disulfide bond links Cys63 and Cys69.

The protein belongs to the frog skin active peptide (FSAP) family. Pleurain subfamily. In terms of tissue distribution, expressed by the skin glands.

It localises to the secreted. In terms of biological role, antimicrobial peptide. Has activity against Gram-positive and -negative bacteria, and fungi. Has little hemolytic activity on red blood cells. This Nidirana pleuraden (Yunnan pond frog) protein is Pleurain-A3.